Reading from the N-terminus, the 358-residue chain is Phenylalanine--tRNA ligase alpha subunit (358 aa).

Glu262 serves as a coordination point for Mg(2+).

This sequence belongs to the class-II aminoacyl-tRNA synthetase family. Phe-tRNA synthetase alpha subunit type 1 subfamily. Tetramer of two alpha and two beta subunits. It depends on Mg(2+) as a cofactor.

The protein resides in the cytoplasm. It carries out the reaction tRNA(Phe) + L-phenylalanine + ATP = L-phenylalanyl-tRNA(Phe) + AMP + diphosphate + H(+). The sequence is that of Phenylalanine--tRNA ligase alpha subunit (pheS) from Streptomyces coelicolor (strain ATCC BAA-471 / A3(2) / M145).